Reading from the N-terminus, the 495-residue chain is Growth/differentiation factor 5 (495 aa).

The N-terminal stretch at 1–27 (MRLPKLLTLLLWHLAWLDLELICTVLG) is a signal peptide. Residues 28-375 (APDLGQRTPG…YLFSQRRKRR (348 aa)) constitute a propeptide that is removed on maturation. Residues 30–162 (DLGQRTPGAK…KEPFRPPPIT (133 aa)) are disordered. The segment covering 124–137 (GGKASSKAGSAPSS) has biased composition (low complexity). Positions 142–156 (KTREPGTPREPKEPF) are enriched in basic and acidic residues. Asn-183 carries N-linked (GlcNAc...) asparagine glycosylation. Cystine bridges form between Cys-394/Cys-460, Cys-423/Cys-492, and Cys-427/Cys-494.

Belongs to the TGF-beta family. In terms of assembly, homodimer; disulfide-linked. Interacts with serine proteases, HTRA1 and HTRA3. Following LPS binding, may form a complex with CXCR4, HSP90AA1 and HSPA8. Interacts with high affinity with NOG; inhibits chondrogenesis. Interacts with high affinity with BMPR1B and lower affinity with BMPR1A; positively regulates chondrocyte differentiation and induces SMAD-dependent signaling. Interacts with FBN1 (via N-terminal domain) and FBN2. Interacts with TGFBR3.

It is found in the secreted. The protein resides in the cell membrane. Functionally, growth factor involved in bone and cartilage formation. During cartilage development regulates differentiation of chondrogenic tissue through two pathways. Firstly, positively regulates differentiation of chondrogenic tissue through its binding of high affinity with BMPR1B and of less affinity with BMPR1A, leading to induction of SMAD1-SMAD5-SMAD8 complex phosphorylation and then SMAD protein signaling transduction. Secondly, negatively regulates chondrogenic differentiation through its interaction with NOG. Required to prevent excessive muscle loss upon denervation. This function requires SMAD4 and is mediated by phosphorylated SMAD1/5/8. Binds bacterial lipopolysaccharide (LPS) and mediates LPS-induced inflammatory response, including TNF secretion by monocytes. The chain is Growth/differentiation factor 5 (Gdf5) from Mus musculus (Mouse).